The chain runs to 1026 residues: HEAT repeat-containing protein 4 (1026 aa).

Residues 135 to 175 (AVKTESSANPEKKLKKSKPASTVREAPRPLIHHPCMHPDML) are disordered. HEAT repeat units follow at residues 530–568 (LLPA…NIMQ), 724–760 (KLMT…QIRD), and 761–794 (KMVL…GQVS).

In Homo sapiens (Human), this protein is HEAT repeat-containing protein 4 (HEATR4).